An 811-amino-acid chain; its full sequence is Phosphoinositide 3-kinase adapter protein 1 (811 aa).

Residues 8–146 form the TIR domain; it reads RGCDILIFYS…AVRKAISEDS (139 aa). Residues 10 to 145 are necessary and sufficient to mediate inhibition of NF-kappa-B downstream of activated TLRs; may mediate interaction with MYD88 and TIRAP; it reads CDILIFYSPD…AAVRKAISED (136 aa). The disordered stretch occupies residues 146–169; that stretch reads SGCDSVTDTEPEDERELPFSKQTN. A DBB domain is found at 182 to 318; it reads VQPDRIRCGA…NIPASGLHLF (137 aa). Position 264 is a phosphotyrosine (Tyr-264). Tyr-420, Tyr-445, and Tyr-460 each carry phosphotyrosine; by SYK. Tyr-513 bears the Phosphotyrosine; by ABL1 mark. Positions 525 to 551 are disordered; that stretch reads DLANRPPVPVPRPEASAPGPPPPPDNE. A compositionally biased stretch (pro residues) spans 530-550; that stretch reads PPVPVPRPEASAPGPPPPPDN. Phosphotyrosine; by ABL1 occurs at positions 553, 570, and 594. A Phosphoserine modification is found at Ser-642. Residue Tyr-694 is modified to Phosphotyrosine; by ABL1. The disordered stretch occupies residues 702–811; that stretch reads VLPARTELRR…PPPPVPPRGR (110 aa). Residues 707–716 show a composition bias toward basic and acidic residues; it reads TELRRGDWKT. The segment covering 717 to 740 has biased composition (low complexity); the sequence is DSMSSTASSTSNRSSTRSLLSVSS. Residue Ser-718 is modified to Phosphoserine. Positions 801–811 are enriched in pro residues; it reads HPPPPVPPRGR.

In terms of assembly, homooligomer. Interacts (phosphorylated on tyrosine residues within YXXM motifs) with PIK3R1 (via SH2 domain); required for BCR- and TLR-mediated activation of phosphoinositide 3-kinase. Interacts (via polyproline C-terminal region) with ABI1 (via SH3 domain); the interaction promotes phosphorylation of PIK3AP1 by ABL1. May interact with MYD88 and TIRAP. Constitutively phosphorylated. Phosphorylated on tyrosine residues in C-terminal region by ABL1. Phosphorylated on tyrosine residues within the YXXM motifs by BTK and SYK. Isoform 1 and isoform 2 are phosphorylated on tyrosine residues, most likely within the YXXM motifs, via CD19 activation. Toll-like receptor activation induces appearance of a phosphorylated form associated with membranes. In terms of tissue distribution, predominantly expressed in spleen (at protein level). Expressed at lower levels in thymus, liver and lung. Expressed in B-cells, macrophages and natural killer (NK) cells.

The protein localises to the cytoplasm. It localises to the cell membrane. Functionally, signaling adapter that contributes to B-cell development by linking B-cell receptor (BCR) signaling to the phosphoinositide 3-kinase (PI3K)-Akt signaling pathway. Has a complementary role to the BCR coreceptor CD19, coupling BCR and PI3K activation by providing a docking site for the PI3K subunit PIK3R1. Alternatively, links Toll-like receptor (TLR) signaling to PI3K activation, a process preventing excessive inflammatory cytokine production. Also involved in the activation of PI3K in natural killer cells. May be involved in the survival of mature B-cells via activation of REL. In Mus musculus (Mouse), this protein is Phosphoinositide 3-kinase adapter protein 1 (Pik3ap1).